Reading from the N-terminus, the 154-residue chain is Putative protein heh-1 (154 aa).

The first 15 residues, 1–15 (MKTVIFLALLGLAAA), serve as a signal peptide directing secretion. Disulfide bonds link cysteine 39/cysteine 50 and cysteine 97/cysteine 103.

This sequence belongs to the NPC2 family.

It is found in the secreted. The polypeptide is Putative protein heh-1 (heh-1) (Caenorhabditis elegans).